Consider the following 206-residue polypeptide: KH domain-containing protein 3 (206 aa).

The interval 1–40 is involved in RNA binding; sequence MDTPRRFPTLVQLMQPKAMPVEVLGHLPKRFSWFHSEFLK. Residues 40-103 enclose the KH; atypical domain; that stretch reads KNPKVVRLEV…SYQEDTIKMI (64 aa). Positions 144-153 are enriched in basic and acidic residues; sequence GTQRSVEVRE. Positions 144-206 are disordered; that stretch reads GTQRSVEVRE…EDTRAPVTRL (63 aa). T145 carries the post-translational modification Phosphothreonine. Residues 166–183 are compositionally biased toward polar residues; it reads TGTQQSLEAANQSGTQRS. S171 is subject to Phosphoserine.

The protein belongs to the KHDC1 family. Component of the subcortical maternal complex (SCMC), at least composed of NLRP5, KHDC3L, OOEP, and TLE6. Within the complex, interacts with NLRP5, KHDC3L and TLE6. The SCMC may facilitate translocation of its components between the nuclear and cytoplasmic compartments. Forms a scaffold complex with OOEP/FLOPED, and interacts with BLM and TRIM25 at DNA replication forks. Interacts with PARP1; the interaction is increased following the formation of DNA double-strand breaks. Interacts with NUMA1.

The protein localises to the cytoplasm. The protein resides in the cell cortex. It is found in the nucleus. Its subcellular location is the mitochondrion. It localises to the cytoskeleton. The protein localises to the microtubule organizing center. The protein resides in the centrosome. It is found in the chromosome. Its function is as follows. Component of the subcortical maternal complex (SCMC), a multiprotein complex that plays a key role in early embryonic development. The SCMC complex is a structural constituent of cytoplasmic lattices, which consist in fibrous structures found in the cytoplasm of oocytes and preimplantation embryos. They are required to store maternal proteins critical for embryonic development, such as proteins that control epigenetic reprogramming of the preimplantation embryo, and prevent their degradation or activation. KHDC3 ensures proper spindle assembly by regulating the localization of AURKA via RHOA signaling and of PLK1 via a RHOA-independent process. Required for the localization of MAD2L1 to kinetochores to enable spindle assembly checkpoint function. As part of the OOEP-KHDC3 scaffold, recruits BLM and TRIM25 to DNA replication forks, thereby promoting the ubiquitination of BLM by TRIM25, enhancing BLM retainment at replication forks and therefore promoting stalled replication fork restart. Regulates homologous recombination-mediated DNA repair via recruitment of RAD51 to sites of DNA double-strand breaks, and sustainment of PARP1 activity, which in turn modulates downstream ATM or ATR activation. Activation of ATM or ATR in response to DNA double-strand breaks may be cell-type specific. Its role in DNA double-strand break repair is independent of its role in restarting stalled replication forks. Promotes neural stem cell neurogenesis and neuronal differentiation in the hippocampus. May regulate normal development of learning, memory and anxiety. Capable of binding RNA. The chain is KH domain-containing protein 3 (KHDC3L) from Macaca mulatta (Rhesus macaque).